Consider the following 319-residue polypeptide: Putative antiporter CaxA (319 aa).

The next 10 membrane-spanning stretches (helical) occupy residues 3-23, 38-58, 81-101, 105-125, 127-147, 175-195, 208-228, 250-270, 275-292, and 297-317; these read VATI…DRFV, MIIG…MVSA, ILLV…SMTI, FPLL…QSLT, AEGA…VYWG, VWLV…VHGA, LIGL…ASLI, ILAV…AAAA, YVMM…LRLG, and INRV…YLLF.

The protein belongs to the Ca(2+):cation antiporter (CaCA) (TC 2.A.19) family.

The protein resides in the cell membrane. Functionally, confers modest Ca(2+) and Na(+) resistance. This chain is Putative antiporter CaxA (caxA), found in Alkalimonas amylolytica.